Here is a 96-residue protein sequence, read N- to C-terminus: MNKYYDLVKAPIITELTNKLIERQNKYTFKVAKTANKVEIKKALESIFQVKVLSVNTRNVLPQFKRKGKFEGYTSGYKKAICKVAPGQKIEILANE.

It belongs to the universal ribosomal protein uL23 family. In terms of assembly, part of the 50S ribosomal subunit. Contacts protein L29, and trigger factor when it is bound to the ribosome.

One of the early assembly proteins it binds 23S rRNA. One of the proteins that surrounds the polypeptide exit tunnel on the outside of the ribosome. Forms the main docking site for trigger factor binding to the ribosome. This chain is Large ribosomal subunit protein uL23, found in Onion yellows phytoplasma (strain OY-M).